The chain runs to 115 residues: Large ribosomal subunit protein uL24 (115 aa).

It belongs to the universal ribosomal protein uL24 family. Part of the 50S ribosomal subunit.

One of two assembly initiator proteins, it binds directly to the 5'-end of the 23S rRNA, where it nucleates assembly of the 50S subunit. Its function is as follows. One of the proteins that surrounds the polypeptide exit tunnel on the outside of the subunit. This chain is Large ribosomal subunit protein uL24, found in Deinococcus geothermalis (strain DSM 11300 / CIP 105573 / AG-3a).